A 264-amino-acid chain; its full sequence is MFECRIDGQFFKKLFETLKDICTEVNLECDENGIKMQSMDCSHVSLVDLNIVSDFFQHYRCDKNCVLGISINFMLKILSVIKEKSTVFLFKEDNENDAVLNIGIIDEEEQSSADDSLEIQVKLINAQKEHLEIPQSEYHCQCTMKSKKFQEFTKYLNSIGDNVSISMKKDAMILSTTGSDIKVTKQFTNDMTDISITCTKSVSQEFATRYLVMFSRASSLSDEVLISLSPHIPISIKFNFKQQLTDLQDPSHLTFFLAPKIGDY.

It belongs to the PCNA family. Homotrimer. Oligomer. Interacts with ORC1 (via PIP-box motif). Interacts with FEN1.

The protein resides in the nucleus. It localises to the chromosome. Its subcellular location is the cytoplasm. In terms of biological role, may be involved in DNA damage response. Appears not to be involved in DNA replication in trophozoites. This chain is Proliferating cell nuclear antigen 2, found in Plasmodium falciparum (isolate 3D7).